The chain runs to 180 residues: Adenine phosphoribosyltransferase (180 aa).

The protein belongs to the purine/pyrimidine phosphoribosyltransferase family. Homodimer.

The protein localises to the cytoplasm. The catalysed reaction is AMP + diphosphate = 5-phospho-alpha-D-ribose 1-diphosphate + adenine. Its pathway is purine metabolism; AMP biosynthesis via salvage pathway; AMP from adenine: step 1/1. In terms of biological role, catalyzes a salvage reaction resulting in the formation of AMP, that is energically less costly than de novo synthesis. The polypeptide is Adenine phosphoribosyltransferase (Marinomonas sp. (strain MWYL1)).